The sequence spans 882 residues: Valine--tRNA ligase (882 aa).

Positions 42–52 match the 'HIGH' region motif; the sequence is PNVTGKLHLGH. The short motif at 522 to 526 is the 'KMSKS' region element; the sequence is KMSKS. Residue Lys-525 participates in ATP binding. A coiled-coil region spans residues 849–873; sequence KIEIEKKKYESYCKQYKKLLESKNN.

The protein belongs to the class-I aminoacyl-tRNA synthetase family. ValS type 1 subfamily. As to quaternary structure, monomer.

The protein localises to the cytoplasm. It carries out the reaction tRNA(Val) + L-valine + ATP = L-valyl-tRNA(Val) + AMP + diphosphate. Functionally, catalyzes the attachment of valine to tRNA(Val). As ValRS can inadvertently accommodate and process structurally similar amino acids such as threonine, to avoid such errors, it has a 'posttransfer' editing activity that hydrolyzes mischarged Thr-tRNA(Val) in a tRNA-dependent manner. The chain is Valine--tRNA ligase from Onion yellows phytoplasma (strain OY-M).